A 1216-amino-acid chain; its full sequence is Probable phospholipid-transporting ATPase 4 (1216 aa).

Residues 1 to 74 (MARGRIRSKL…TTRYNLITFF (74 aa)) lie on the Cytoplasmic side of the membrane. The chain crosses the membrane as a helical span at residues 75 to 96 (PKCLYEQFHRAANFYFLVAAIL). The Extracellular segment spans residues 97–100 (SVFP). Residues 101–123 (LSPFNKWSMIAPLVFVVGLSMLK) form a helical membrane-spanning segment. The Cytoplasmic portion of the chain corresponds to 124 to 305 (EALEDWSRFM…SRIEKTMDYI (182 aa)). Residues 306–327 (IYTLLVLLILISCISSSGFAWE) form a helical membrane-spanning segment. The Extracellular portion of the chain corresponds to 328–359 (TKFHMPKWWYLRPEEPENLTNPSNPVYAGFVH). The helical transmembrane segment at 360–377 (LITALLLYGYLIPISLYV) threads the bilayer. At 378–922 (SIEVVKVLQA…HGHWCYKRIA (545 aa)) the chain is on the cytoplasmic side. D425 functions as the 4-aspartylphosphate intermediate in the catalytic mechanism. Residue K605 forms a Glycyl lysine isopeptide (Lys-Gly) (interchain with G-Cter in ubiquitin) linkage. The Mg(2+) site is built by D867 and D871. The helical transmembrane segment at 923–942 (QMICYFFYKNIAFGLTLFYF) threads the bilayer. Over 943–956 (EAFTGFSGQSVYND) the chain is Extracellular. Residues 957-976 (YYLLLFNVVLTSLPVIALGV) traverse the membrane as a helical segment. The Cytoplasmic segment spans residues 977-1006 (FEQDVSSEICLQFPALYQQGKKNLFFDWYR). Residues 1007–1029 (ILGWMGNGVYSSLVIFFLNIGII) traverse the membrane as a helical segment. At 1030-1042 (YEQAFRVSGQTAD) the chain is on the extracellular side. Residues 1043-1065 (MDAVGTTMFTCIIWAVNVQIALT) form a helical membrane-spanning segment. Residues 1066 to 1071 (VSHFTW) lie on the Cytoplasmic side of the membrane. A helical membrane pass occupies residues 1072-1092 (IQHVLIWGSIGLWYLFVALYG). Residues 1093–1109 (MMPPSLSGNIYRILVEI) are Extracellular-facing. Residues 1110–1134 (LAPAPIYWIATFLVTVTTVLPYFAH) form a helical membrane-spanning segment. Residues 1135–1216 (ISFQRFLHPL…TQDTMSPRSV (82 aa)) are Cytoplasmic-facing. A disordered region spans residues 1195–1216 (LNKKQSNMSQFSTQDTMSPRSV). Residues 1198–1216 (KQSNMSQFSTQDTMSPRSV) are compositionally biased toward polar residues.

Belongs to the cation transport ATPase (P-type) (TC 3.A.3) family. Type IV subfamily.

The protein localises to the membrane. The catalysed reaction is ATP + H2O + phospholipidSide 1 = ADP + phosphate + phospholipidSide 2.. Involved in transport of phospholipids. This chain is Probable phospholipid-transporting ATPase 4, found in Arabidopsis thaliana (Mouse-ear cress).